A 78-amino-acid chain; its full sequence is Antitoxin VapB1 (78 aa).

The region spanning 3-44 (TKVFQSGNSQAVRIPMDFRFDVDTVEIFRKENGDVVLRPVSK) is the SpoVT-AbrB domain.

This sequence belongs to the VapB family. Forms multimers, as well forming as a complex with VapC1.

Functionally, antitoxin component of a type II toxin-antitoxin (TA) system. Upon expression in E.coli neutralizes the effect of toxin VapC1. In vitro inhibits the RNase activity of VapC1. This is Antitoxin VapB1 (vapB1) from Haemophilus influenzae (strain R2866).